The following is a 111-amino-acid chain: ATP synthase subunit c (111 aa).

The next 2 membrane-spanning stretches (helical) occupy residues 38-58 (GLGV…GSGL) and 89-109 (AGIA…LIFV).

The protein belongs to the ATPase C chain family. In terms of assembly, F-type ATPases have 2 components, F(1) - the catalytic core - and F(0) - the membrane proton channel. F(1) has five subunits: alpha(3), beta(3), gamma(1), delta(1), epsilon(1). F(0) has three main subunits: a(1), b(2) and c(10-14). The alpha and beta chains form an alternating ring which encloses part of the gamma chain. F(1) is attached to F(0) by a central stalk formed by the gamma and epsilon chains, while a peripheral stalk is formed by the delta and b chains.

It is found in the cell membrane. Functionally, f(1)F(0) ATP synthase produces ATP from ADP in the presence of a proton or sodium gradient. F-type ATPases consist of two structural domains, F(1) containing the extramembraneous catalytic core and F(0) containing the membrane proton channel, linked together by a central stalk and a peripheral stalk. During catalysis, ATP synthesis in the catalytic domain of F(1) is coupled via a rotary mechanism of the central stalk subunits to proton translocation. Its function is as follows. Key component of the F(0) channel; it plays a direct role in translocation across the membrane. A homomeric c-ring of between 10-14 subunits forms the central stalk rotor element with the F(1) delta and epsilon subunits. This chain is ATP synthase subunit c, found in Mycoplasmopsis synoviae (strain 53) (Mycoplasma synoviae).